Here is a 489-residue protein sequence, read N- to C-terminus: N-succinylglutamate 5-semialdehyde dehydrogenase (489 aa).

Residue 221-226 (GSSGTG) participates in NAD(+) binding. Active-site residues include Glu-244 and Cys-278.

Belongs to the aldehyde dehydrogenase family. AstD subfamily.

The enzyme catalyses N-succinyl-L-glutamate 5-semialdehyde + NAD(+) + H2O = N-succinyl-L-glutamate + NADH + 2 H(+). It functions in the pathway amino-acid degradation; L-arginine degradation via AST pathway; L-glutamate and succinate from L-arginine: step 4/5. Catalyzes the NAD-dependent reduction of succinylglutamate semialdehyde into succinylglutamate. This Sorangium cellulosum (strain So ce56) (Polyangium cellulosum (strain So ce56)) protein is N-succinylglutamate 5-semialdehyde dehydrogenase.